The chain runs to 245 residues: Phosphoribosyl isomerase A (245 aa).

Aspartate 11 serves as the catalytic Proton acceptor. Residue aspartate 130 is the Proton donor of the active site.

This sequence belongs to the HisA/HisF family.

Its subcellular location is the cytoplasm. It carries out the reaction 1-(5-phospho-beta-D-ribosyl)-5-[(5-phospho-beta-D-ribosylamino)methylideneamino]imidazole-4-carboxamide = 5-[(5-phospho-1-deoxy-D-ribulos-1-ylimino)methylamino]-1-(5-phospho-beta-D-ribosyl)imidazole-4-carboxamide. It catalyses the reaction N-(5-phospho-beta-D-ribosyl)anthranilate = 1-(2-carboxyphenylamino)-1-deoxy-D-ribulose 5-phosphate. It functions in the pathway amino-acid biosynthesis; L-histidine biosynthesis; L-histidine from 5-phospho-alpha-D-ribose 1-diphosphate: step 4/9. The protein operates within amino-acid biosynthesis; L-tryptophan biosynthesis; L-tryptophan from chorismate: step 3/5. Involved in both the histidine and tryptophan biosynthetic pathways. In Mycobacterium bovis (strain ATCC BAA-935 / AF2122/97), this protein is Phosphoribosyl isomerase A (priA).